Here is a 147-residue protein sequence, read N- to C-terminus: Large ribosomal subunit protein uL15 (147 aa).

Positions 1–20 are enriched in basic and acidic residues; that stretch reads MTLRLNDLKPADGARTERTR. Residues 1 to 61 are disordered; that stretch reads MTLRLNDLKP…GFEGGQTPMQ (61 aa). Positions 23–33 are enriched in gly residues; that stretch reads RGIGSGLGKTA. Positions 34–47 are enriched in basic residues; that stretch reads GRGHKGSFARKGGG.

This sequence belongs to the universal ribosomal protein uL15 family. In terms of assembly, part of the 50S ribosomal subunit.

Binds to the 23S rRNA. The chain is Large ribosomal subunit protein uL15 from Xanthomonas axonopodis pv. citri (strain 306).